The chain runs to 301 residues: ATP synthase gamma chain (301 aa).

It belongs to the ATPase gamma chain family. F-type ATPases have 2 components, CF(1) - the catalytic core - and CF(0) - the membrane proton channel. CF(1) has five subunits: alpha(3), beta(3), gamma(1), delta(1), epsilon(1). CF(0) has three main subunits: a, b and c.

The protein resides in the cell inner membrane. In terms of biological role, produces ATP from ADP in the presence of a proton gradient across the membrane. The gamma chain is believed to be important in regulating ATPase activity and the flow of protons through the CF(0) complex. The protein is ATP synthase gamma chain of Bordetella bronchiseptica (strain ATCC BAA-588 / NCTC 13252 / RB50) (Alcaligenes bronchisepticus).